A 506-amino-acid chain; its full sequence is RNA-splicing ligase RtcB homolog 1 (506 aa).

Mn(2+) is bound by residues aspartate 120, cysteine 123, histidine 228, histidine 260, and histidine 354. Residue asparagine 227–glutamate 231 participates in GMP binding. Residues histidine 354–asparagine 355, glycine 403–methionine 406, serine 410, histidine 429–glycine 432, and lysine 505 contribute to the GMP site. The GMP-histidine intermediate role is filled by histidine 429.

This sequence belongs to the RtcB family. As to quaternary structure, catalytic component of the tRNA-splicing ligase complex. Mn(2+) serves as cofactor.

The catalysed reaction is a 3'-end 3'-phospho-ribonucleotide-RNA + a 5'-end dephospho-ribonucleoside-RNA + GTP = a ribonucleotidyl-ribonucleotide-RNA + GMP + diphosphate. It catalyses the reaction a 3'-end 2',3'-cyclophospho-ribonucleotide-RNA + a 5'-end dephospho-ribonucleoside-RNA + GTP + H2O = a ribonucleotidyl-ribonucleotide-RNA + GMP + diphosphate + H(+). Functionally, catalytic subunit of the tRNA-splicing ligase complex that acts by directly joining spliced tRNA halves to mature-sized tRNAs by incorporating the precursor-derived splice junction phosphate into the mature tRNA as a canonical 3',5'-phosphodiester. May act as an RNA ligase with broad substrate specificity, and may function toward other RNAs. This Culex quinquefasciatus (Southern house mosquito) protein is RNA-splicing ligase RtcB homolog 1.